A 539-amino-acid chain; its full sequence is uncharacterized protein (539 aa).

5 helical membrane passes run 4–22 (LVEN…GLLL), 27–46 (IFGF…ALST), 56–78 (LIYV…PGFF), 90–112 (ALTL…VLNI), and 155–177 (PVVA…IAIF). 2 RCK C-terminal domains span residues 187–269 (KEAE…AIGE) and 271–352 (IDGD…LLGD). 4 helical membrane-spanning segments follow: residues 360–382 (FNLL…EFPL), 422–444 (LALR…GAGF), 453–475 (SLTI…LFVG), and 516–538 (YTSV…LFLL).

Belongs to the AAE transporter (TC 2.A.81) family.

It localises to the cell membrane. This is an uncharacterized protein from Corynebacterium glutamicum (strain ATCC 13032 / DSM 20300 / JCM 1318 / BCRC 11384 / CCUG 27702 / LMG 3730 / NBRC 12168 / NCIMB 10025 / NRRL B-2784 / 534).